Consider the following 101-residue polypeptide: NAD(P)H-quinone oxidoreductase subunit 4L, chloroplastic (101 aa).

3 consecutive transmembrane segments (helical) span residues 2-22 (ILEH…YGLI), 32-52 (MCLE…SDFF), and 61-81 (IFCI…LAIV).

It belongs to the complex I subunit 4L family. In terms of assembly, NDH is composed of at least 16 different subunits, 5 of which are encoded in the nucleus.

The protein resides in the plastid. Its subcellular location is the chloroplast thylakoid membrane. The enzyme catalyses a plastoquinone + NADH + (n+1) H(+)(in) = a plastoquinol + NAD(+) + n H(+)(out). It carries out the reaction a plastoquinone + NADPH + (n+1) H(+)(in) = a plastoquinol + NADP(+) + n H(+)(out). Its function is as follows. NDH shuttles electrons from NAD(P)H:plastoquinone, via FMN and iron-sulfur (Fe-S) centers, to quinones in the photosynthetic chain and possibly in a chloroplast respiratory chain. The immediate electron acceptor for the enzyme in this species is believed to be plastoquinone. Couples the redox reaction to proton translocation, and thus conserves the redox energy in a proton gradient. In Arabidopsis thaliana (Mouse-ear cress), this protein is NAD(P)H-quinone oxidoreductase subunit 4L, chloroplastic.